The primary structure comprises 510 residues: NAD(P)H-quinone oxidoreductase subunit 2 B, chloroplastic (510 aa).

A run of 13 helical transmembrane segments spans residues 24 to 44 (LLLF…GLIL), 57 to 77 (IPWL…ALLF), 99 to 119 (IFQF…VEYI), 124 to 144 (MAIT…MFLC), 149 to 169 (LITI…LSGY), 183 to 203 (YLLM…WLYG), 227 to 247 (PGIS…LSLA), 295 to 315 (WHLL…LIAI), 323 to 343 (MLAY…IVGD), 354 to 374 (YMLF…LFGL), 395 to 415 (ALSL…AGFF), 418 to 438 (LHLF…IGLL), and 482 to 502 (LSMI…NPIV).

It belongs to the complex I subunit 2 family. In terms of assembly, NDH is composed of at least 16 different subunits, 5 of which are encoded in the nucleus.

It is found in the plastid. Its subcellular location is the chloroplast thylakoid membrane. It carries out the reaction a plastoquinone + NADH + (n+1) H(+)(in) = a plastoquinol + NAD(+) + n H(+)(out). The catalysed reaction is a plastoquinone + NADPH + (n+1) H(+)(in) = a plastoquinol + NADP(+) + n H(+)(out). Functionally, NDH shuttles electrons from NAD(P)H:plastoquinone, via FMN and iron-sulfur (Fe-S) centers, to quinones in the photosynthetic chain and possibly in a chloroplast respiratory chain. The immediate electron acceptor for the enzyme in this species is believed to be plastoquinone. Couples the redox reaction to proton translocation, and thus conserves the redox energy in a proton gradient. The polypeptide is NAD(P)H-quinone oxidoreductase subunit 2 B, chloroplastic (Manihot esculenta (Cassava)).